A 1287-amino-acid chain; its full sequence is Vacuolating cytotoxin autotransporter (1287 aa).

Positions 1-33 (MEIQQTHRKINRPLVSLALVGALVSITPQQSHA) are cleaved as a signal peptide. Positions 326–381 (PPEGGYKDKPNNTPSQSGAKNDKQESSQNNSNTQVINPPNSTQKTEVQPTQVIDGP) are disordered. A compositionally biased stretch (polar residues) spans 351–376 (SSQNNSNTQVINPPNSTQKTEVQPTQ). The 274-residue stretch at 1014–1287 (KYEKPTNVWA…ASNLGMRYSF (274 aa)) folds into the Autotransporter domain.

It localises to the periplasm. The protein localises to the secreted. The protein resides in the cell surface. It is found in the cell outer membrane. Functionally, induces vacuolation of eukaryotic cells. Causes ulceration and gastric lesions. This chain is Vacuolating cytotoxin autotransporter (vacA), found in Helicobacter pylori (Campylobacter pylori).